The primary structure comprises 149 residues: Large ribosomal subunit protein bL9 (149 aa).

The protein belongs to the bacterial ribosomal protein bL9 family.

In terms of biological role, binds to the 23S rRNA. This chain is Large ribosomal subunit protein bL9, found in Syntrophus aciditrophicus (strain SB).